The sequence spans 499 residues: Diacylglycerol kinase 1 (499 aa).

The DAGKc domain occupies Ala41–Met194. Positions Pro442–Lys479 are disordered. A compositionally biased stretch (polar residues) spans Lys446–Cys456. Residues Asn459–Leu468 show a composition bias toward basic and acidic residues.

The protein belongs to the eukaryotic diacylglycerol kinase family. Monomer. As to expression, highly expressed in roots.

It carries out the reaction a 1,2-diacyl-sn-glycerol + ATP = a 1,2-diacyl-sn-glycero-3-phosphate + ADP + H(+). Phosphorylates the second messenger diacylglycerol (DAG) to generate phosphatidic acid (PA), another important signaling molecule. PA is required for plant development and responses to abiotic stress. May play a role in disease resistance responses to pathogen attack. Modulates root architecture by regulating the ratio of DAG and PA, which have opposite effect on the promotion or suppression of lateral roots vs seminal roots. Suppresses lateral root number, but promotes seminal root and crown root thickness. The polypeptide is Diacylglycerol kinase 1 (Oryza sativa subsp. japonica (Rice)).